Reading from the N-terminus, the 82-residue chain is Large ribosomal subunit protein bL31B-2 (82 aa).

The protein belongs to the bacterial ribosomal protein bL31 family. Type B subfamily. Part of the 50S ribosomal subunit.

The chain is Large ribosomal subunit protein bL31B-2 from Streptomyces avermitilis (strain ATCC 31267 / DSM 46492 / JCM 5070 / NBRC 14893 / NCIMB 12804 / NRRL 8165 / MA-4680).